The primary structure comprises 223 residues: Probable Brix domain-containing ribosomal biogenesis protein (223 aa).

A Brix domain is found at 1 to 196 (MMLITTSHRP…IWIMEDGRRW (196 aa)).

Functionally, probably involved in the biogenesis of the ribosome. The polypeptide is Probable Brix domain-containing ribosomal biogenesis protein (Pyrococcus furiosus (strain ATCC 43587 / DSM 3638 / JCM 8422 / Vc1)).